The following is a 361-amino-acid chain: Chorismate synthase (361 aa).

The NADP(+) site is built by Arg48 and Arg54. Residues 131–133 (RSS), 243–244 (NA), Gly287, 302–306 (KPTSS), and Arg328 each bind FMN.

Belongs to the chorismate synthase family. Homotetramer. FMNH2 serves as cofactor.

The catalysed reaction is 5-O-(1-carboxyvinyl)-3-phosphoshikimate = chorismate + phosphate. The protein operates within metabolic intermediate biosynthesis; chorismate biosynthesis; chorismate from D-erythrose 4-phosphate and phosphoenolpyruvate: step 7/7. Its function is as follows. Catalyzes the anti-1,4-elimination of the C-3 phosphate and the C-6 proR hydrogen from 5-enolpyruvylshikimate-3-phosphate (EPSP) to yield chorismate, which is the branch point compound that serves as the starting substrate for the three terminal pathways of aromatic amino acid biosynthesis. This reaction introduces a second double bond into the aromatic ring system. The polypeptide is Chorismate synthase (Rhodopseudomonas palustris (strain BisB5)).